The sequence spans 248 residues: Mannosylfructose-phosphate phosphatase (248 aa).

The protein belongs to the sucrose phosphatase family.

It catalyses the reaction beta-D-fructofuranosyl alpha-D-mannopyranoside 6(F)-phosphate + H2O = beta-D-fructofuranosyl alpha-D-mannopyranoside + phosphate. The protein operates within carbohydrate metabolism; mannosylfructose biosynthesis; beta-D-fructofuranosyl alpha-D-mannopyranoside from D-fructose 6-phosphate and GDP-alpha-D-mannose: step 2/2. Inhibited by the phosphatase inhibitors fluoride, molybdate and orthovanadate. This is Mannosylfructose-phosphate phosphatase from Agrobacterium fabrum (strain C58 / ATCC 33970) (Agrobacterium tumefaciens (strain C58)).